A 311-amino-acid chain; its full sequence is Retron Ec78 reverse transcriptase (311 aa).

One can recognise a Reverse transcriptase domain in the interval 15–241; sequence DSGISAFLVT…HNRHVTGVTI (227 aa). Residues aspartate 96, aspartate 187, and aspartate 188 each contribute to the Mg(2+) site.

It belongs to the bacterial reverse transcriptase family.

The enzyme catalyses DNA(n) + a 2'-deoxyribonucleoside 5'-triphosphate = DNA(n+1) + diphosphate. Reverse transcriptase (RT) component of antiviral defense system retron Ec78, composed of a non-coding RNA (ncRNA), this reverse transcriptase (RT), a probable ATPase and a putative HNH endonuclease. Expression of retron Ec78 confers protection against bacteriophage T5. At multiplicity of infection (MOI) of 0.02 cultures slow growth when infected with T5 but do not collapse, at MOI 2 cultures enter growth stasis. Responsible for synthesis of msDNA-Ec78 (a linear ssDNA with a 5'-terminal phosphate residue). Unlike most known msDNAs the mature product does not have an RNA component. The retron transcript serves as primer and template for the reaction, and codes for the RT. Not mutagenic when cloned in E.coli. It is thought to be synthesized as a branched RNA with a 2',5'-phosphodiester linkage to ssDNA; the linkage is cleaved endonucleolytically by ExoVII (xseA-xseB) leaving the observed mature 5'-ssDNA terminus. Overexpression of the ncRNA and RT, which leads to increased levels of msDNA, is not mutagenic in vivo. As the stem in the msDNA does not have a mismatch it probably does not bind or sequester MutS and/or MutL. The chain is Retron Ec78 reverse transcriptase from Escherichia coli.